The following is a 163-amino-acid chain: Cyclic pyranopterin monophosphate synthase (163 aa).

Substrate is bound by residues 79-81 (LCH) and 117-118 (ME). D132 is a catalytic residue.

Belongs to the MoaC family. As to quaternary structure, homohexamer; trimer of dimers.

It carries out the reaction (8S)-3',8-cyclo-7,8-dihydroguanosine 5'-triphosphate = cyclic pyranopterin phosphate + diphosphate. Its pathway is cofactor biosynthesis; molybdopterin biosynthesis. Its function is as follows. Catalyzes the conversion of (8S)-3',8-cyclo-7,8-dihydroguanosine 5'-triphosphate to cyclic pyranopterin monophosphate (cPMP). This chain is Cyclic pyranopterin monophosphate synthase, found in Chloroflexus aurantiacus (strain ATCC 29366 / DSM 635 / J-10-fl).